The sequence spans 806 residues: Protein translocase subunit SecA 2 (806 aa).

ATP is bound by residues glutamine 122, 140 to 144 (GEGKT), and aspartate 533.

This sequence belongs to the SecA family. In terms of assembly, monomer and homodimer. Part of the essential Sec protein translocation apparatus which comprises SecA, SecYEG and auxiliary proteins SecDF. Other proteins may also be involved.

The protein resides in the cell membrane. Its subcellular location is the cytoplasm. The catalysed reaction is ATP + H2O + cellular proteinSide 1 = ADP + phosphate + cellular proteinSide 2.. Functionally, part of the Sec protein translocase complex. Interacts with the SecYEG preprotein conducting channel. Has a central role in coupling the hydrolysis of ATP to the transfer of proteins into and across the cell membrane, serving as an ATP-driven molecular motor driving the stepwise translocation of polypeptide chains across the membrane. The chain is Protein translocase subunit SecA 2 from Mycobacterium ulcerans (strain Agy99).